A 475-amino-acid polypeptide reads, in one-letter code: ATP synthase subunit beta (475 aa).

Residue 152 to 159 participates in ATP binding; it reads GGAGVGKT.

It belongs to the ATPase alpha/beta chains family. As to quaternary structure, F-type ATPases have 2 components, CF(1) - the catalytic core - and CF(0) - the membrane proton channel. CF(1) has five subunits: alpha(3), beta(3), gamma(1), delta(1), epsilon(1). CF(0) has three main subunits: a(1), b(2) and c(9-12). The alpha and beta chains form an alternating ring which encloses part of the gamma chain. CF(1) is attached to CF(0) by a central stalk formed by the gamma and epsilon chains, while a peripheral stalk is formed by the delta and b chains.

The protein resides in the cell inner membrane. It carries out the reaction ATP + H2O + 4 H(+)(in) = ADP + phosphate + 5 H(+)(out). Its function is as follows. Produces ATP from ADP in the presence of a proton gradient across the membrane. The catalytic sites are hosted primarily by the beta subunits. This chain is ATP synthase subunit beta, found in Wolbachia sp. subsp. Drosophila simulans (strain wRi).